A 113-amino-acid polypeptide reads, in one-letter code: Large ribosomal subunit protein bL17 (113 aa).

Belongs to the bacterial ribosomal protein bL17 family. As to quaternary structure, part of the 50S ribosomal subunit. Contacts protein L32.

The chain is Large ribosomal subunit protein bL17 from Clostridium perfringens (strain ATCC 13124 / DSM 756 / JCM 1290 / NCIMB 6125 / NCTC 8237 / Type A).